The primary structure comprises 299 residues: Phosphoribosylaminoimidazole-succinocarboxamide synthase (299 aa).

Belongs to the SAICAR synthetase family.

It carries out the reaction 5-amino-1-(5-phospho-D-ribosyl)imidazole-4-carboxylate + L-aspartate + ATP = (2S)-2-[5-amino-1-(5-phospho-beta-D-ribosyl)imidazole-4-carboxamido]succinate + ADP + phosphate + 2 H(+). Its pathway is purine metabolism; IMP biosynthesis via de novo pathway; 5-amino-1-(5-phospho-D-ribosyl)imidazole-4-carboxamide from 5-amino-1-(5-phospho-D-ribosyl)imidazole-4-carboxylate: step 1/2. This Desulfatibacillum aliphaticivorans protein is Phosphoribosylaminoimidazole-succinocarboxamide synthase.